Here is a 314-residue protein sequence, read N- to C-terminus: Cytochrome f (314 aa).

The N-terminal stretch at 1 to 30 is a signal peptide; sequence MATNKFFKSLLFTLTIAISSFGFCVENSSA. Residues tyrosine 31, cysteine 51, cysteine 54, and histidine 55 each contribute to the heme site. The helical transmembrane segment at 280-300 threads the bilayer; it reads ILGYLAFCFCLLLTQVLLVLK.

This sequence belongs to the cytochrome f family. In terms of assembly, the 4 large subunits of the cytochrome b6-f complex are cytochrome b6, subunit IV (17 kDa polypeptide, petD), cytochrome f and the Rieske protein, while the 4 small subunits are PetG, PetL, PetM and PetN. The complex functions as a dimer. The cofactor is heme.

The protein localises to the plastid. It is found in the chloroplast thylakoid membrane. Component of the cytochrome b6-f complex, which mediates electron transfer between photosystem II (PSII) and photosystem I (PSI), cyclic electron flow around PSI, and state transitions. The polypeptide is Cytochrome f (Thalassiosira pseudonana (Marine diatom)).